A 104-amino-acid polypeptide reads, in one-letter code: Large ribosomal subunit protein uL24 (104 aa).

It belongs to the universal ribosomal protein uL24 family. In terms of assembly, part of the 50S ribosomal subunit.

In terms of biological role, one of two assembly initiator proteins, it binds directly to the 5'-end of the 23S rRNA, where it nucleates assembly of the 50S subunit. One of the proteins that surrounds the polypeptide exit tunnel on the outside of the subunit. The polypeptide is Large ribosomal subunit protein uL24 (Aliivibrio fischeri (strain ATCC 700601 / ES114) (Vibrio fischeri)).